A 225-amino-acid chain; its full sequence is Insulin-induced gene 2 protein (225 aa).

At 1–28 (MAEGETESPRPKKCGPYISSVTSQSVNV) the chain is on the cytoplasmic side. Residues 29–51 (VIRGVVLFFIGVFLALVLNLLQI) form a helical membrane-spanning segment. The Lumenal portion of the chain corresponds to 52–70 (QRNVTLFPPDVITSIFSSA). The chain crosses the membrane as a helical span at residues 71–88 (WWVPPCCGTASAVIGLLY). Over 89–103 (PCIDRHLGEPHKFKR) the chain is Cytoplasmic. A helical transmembrane segment spans residues 104-126 (EWSSVMRCVAVFVGINHASAKVD). At 127–129 (FDN) the chain is on the lumenal side. The helical transmembrane segment at 130 to 148 (NFQFSLTLAALSVGLWWTF) threads the bilayer. The Cytoplasmic portion of the chain corresponds to 149-153 (DRSRS). S151 carries the phosphoserine modification. Residues 154–175 (GFGLGVGIAFLATVVTQLLVYN) traverse the membrane as a helical segment. The Lumenal portion of the chain corresponds to 176 to 189 (GVYQYTSPDFLYVR). A helical membrane pass occupies residues 190 to 207 (SWLPCIFFAGGITMGNIG). The Cytoplasmic segment spans residues 208-225 (RQLAMYECKVIAEKSHQE). C215 carries the post-translational modification Cysteine sulfenic acid (-SOH); alternate. Residue C215 forms a Glycyl cysteine thioester (Cys-Gly) (interchain with G-Cter in ubiquitin); alternate linkage. The KxHxx motif lies at 219–225 (AEKSHQE).

The protein belongs to the INSIG family. As to quaternary structure, interacts with SCAP; interaction is direct and only takes place in the presence of sterols; it prevents interaction between SCAP and the coat protein complex II (COPII). Associates with the SCAP-SREBP complex (composed of SCAP and SREBF1/SREBP1 or SREBF2/SREBP2); association is mediated via its interaction with SCAP and only takes place in the presence of sterols. Interacts with RNF139. Interacts with RNF145. Phosphorylation at Ser-151 by PCK1 reduces binding to oxysterol, disrupting the interaction between INSIG2 and SCAP, thereby promoting nuclear translocation of SREBP proteins (SREBF1/SREBP1 or SREBF2/SREBP2) and subsequent transcription of downstream lipogenesis-related genes. In terms of processing, polyubiquitinated by AMFR/gp78 at Cys-215 in some tissues such as adipose tissues, undifferentiated myoblasts and liver, leading to its degradation. In differentiated myotubes, Cys-215 oxidation prevents ubiquitination at the same site, resulting in protein stabilization. Post-translationally, oxidized at Cys-215 in differentiated myotubes, preventing ubiquitination at the same site, and resulting in protein stabilization. As to expression, expressed in liver, testis, kidney, spleen, intestine, brain and adrenal gland.

The protein resides in the endoplasmic reticulum membrane. In terms of biological role, oxysterol-binding protein that mediates feedback control of cholesterol synthesis by controlling both endoplasmic reticulum to Golgi transport of SCAP and degradation of HMGCR. Acts as a negative regulator of cholesterol biosynthesis by mediating the retention of the SCAP-SREBP complex in the endoplasmic reticulum, thereby blocking the processing of sterol regulatory element-binding proteins (SREBPs) SREBF1/SREBP1 and SREBF2/SREBP2. Binds oxysterol, including 22-hydroxycholesterol, 24-hydroxycholesterol, 25-hydroxycholesterol and 27-hydroxycholesterol, regulating interaction with SCAP and retention of the SCAP-SREBP complex in the endoplasmic reticulum. In presence of oxysterol, interacts with SCAP, retaining the SCAP-SREBP complex in the endoplasmic reticulum, thereby preventing SCAP from escorting SREBF1/SREBP1 and SREBF2/SREBP2 to the Golgi. Sterol deprivation or phosphorylation by PCK1 reduce oxysterol-binding, disrupting the interaction between INSIG2 and SCAP, thereby promoting Golgi transport of the SCAP-SREBP complex, followed by processing and nuclear translocation of SREBF1/SREBP1 and SREBF2/SREBP2. Also regulates cholesterol synthesis by regulating degradation of HMGCR: initiates the sterol-mediated ubiquitin-mediated endoplasmic reticulum-associated degradation (ERAD) of HMGCR via recruitment of the reductase to the ubiquitin ligase RNF139. This Mus musculus (Mouse) protein is Insulin-induced gene 2 protein.